Reading from the N-terminus, the 151-residue chain is Myosin catalytic light chain, smooth muscle (151 aa).

Residue A1 is modified to N-acetylalanine. 3 consecutive EF-hand domains span residues 6–41, 83–118, and 119–151; these read DRIT…LGQN, GSYE…LGEK, and MSEE…LLEG.

In terms of biological role, in molluscan muscle, calcium regulation is associated with myosin rather than with actin. Muscle myosin contains two types of light chains: the catalytic light chain, essential for ATPase activity, and the regulatory light chain, a calcium-binding protein responsible for Ca(2+) dependent binding and Ca(2+) dependent Mg-ATPase activity. The polypeptide is Myosin catalytic light chain, smooth muscle (Halocynthia roretzi (Sea squirt)).